The sequence spans 697 residues: SPX domain-containing membrane protein At1g63010 (697 aa).

In terms of domain architecture, SPX spans 2 to 145; that stretch reads VAFGKYLQRK…GYRFADYYVK (144 aa). The next 6 helical transmembrane spans lie at 247–267, 278–298, 315–335, 337–356, 375–395, and 411–431; these read FNSLLLNLGNTFLYMVNTYII, LGAAATVCGVVIGSMAVAQVF, LVFSSIALFIGNLMYALAYDA, SIALLLLGRVCCGLGSARAV, AGFVSASALGMACGPALAGLL, and LPGWVMAVAWLFYLVWLCISF. Residues 439–459 form a disordered region; it reads EDGEKNNRNETTSDRVESSRV. 5 helical membrane passes run 513-533, 544-564, 576-596, 604-624, and 670-690; these read LLIYFMLKYSMEILLSESSVI, SVAIFLACLGLTVLPINILVG, ILLTSEIIVFLGILFSFNLFV, VISGLIMFVAAEVLEGVNLSL, and LLNATLLPSLVICIGSIVATC.

It belongs to the major facilitator superfamily.

It localises to the membrane. The polypeptide is SPX domain-containing membrane protein At1g63010 (Arabidopsis thaliana (Mouse-ear cress)).